The following is a 366-amino-acid chain: Peptide chain release factor 2 (366 aa).

Gln251 is subject to N5-methylglutamine.

Belongs to the prokaryotic/mitochondrial release factor family. In terms of processing, methylated by PrmC. Methylation increases the termination efficiency of RF2.

Its subcellular location is the cytoplasm. In terms of biological role, peptide chain release factor 2 directs the termination of translation in response to the peptide chain termination codons UGA and UAA. This Listeria monocytogenes serotype 4b (strain F2365) protein is Peptide chain release factor 2 (prfB).